The sequence spans 196 residues: MSKIQVAHSSRLANLIDYKLRVLTQDGRVYIGQLMAFDKHMNLVLNECIEERVPKTQLDKLRPRKDSKDGTTLNIKVEKRVLGLTILRGEQILSTVVEDKPLLSKKERLVRDKKEKKQAQKQTKLRKEKEKKPGKIAKPNTANAKHTSSNSREIAQPSSSRYNGGNDNIGANRSRFNNEAPPQTRKFQPPPGFKRK.

The 95-residue stretch at Ala7–Pro101 folds into the Sm domain. Residues Lys105 to Lys132 carry the Nuclear localization signal motif. Residues Arg108 to Gln118 are compositionally biased toward basic and acidic residues. The interval Arg108–Lys196 is disordered. Positions Asn140–Pro181 are enriched in polar residues.

This sequence belongs to the snRNP SmB/SmN family. In terms of assembly, component of the Sm core complex, present in spliceosomal snRNP U1, U2, U4/U6 and U5. The core complex contains SMB1, SMD1, SMD2, SMD3, SME1, SMX3 and SMX2 (Sm proteins B, D1, D2, D3, E, F and G, respectively), and is probably a heptameric ring structure. SMB1 specifically interacts with SMD3. Belongs to the CWC complex (or CEF1-associated complex), a spliceosome sub-complex reminiscent of a late-stage spliceosome composed of the U2, U5 and U6 snRNAs and at least BUD13, BUD31, BRR2, CDC40, CEF1, CLF1, CUS1, CWC2, CWC15, CWC21, CWC22, CWC23, CWC24, CWC25, CWC27, ECM2, HSH155, IST3, ISY1, LEA1, MSL1, NTC20, PRP8, PRP9, PRP11, PRP19, PRP21, PRP22, PRP45, PRP46, SLU7, SMB1, SMD1, SMD2, SMD3, SMX2, SMX3, SNT309, SNU114, SPP2, SYF1, SYF2, RSE1 and YJU2. Component of the U4/U6-U5 tri-snRNP complex composed of the U4, U6 and U5 snRNAs and at least PRP3, PRP4, PRP6, PRP8, PRP18, PRP38, SNU13, SNU23, SNU66, SNU114, SPP381, SMB1, SMD1, SMD2, SMD3, SMX2, SMX3, LSM2, LSM3, LSM4, LSM5, LSM6, LSM7, LSM8, BRR2 and DIB1. Interacts with the trimethylguanosine synthase TGS1.

It localises to the nucleus. The protein localises to the cytoplasm. Plays a role in pre-mRNA splicing as a core component of the spliceosomal U1, U2, U4 and U5 small nuclear ribonucleoproteins (snRNPs), the building blocks of the spliceosome. The sequence is that of Small nuclear ribonucleoprotein-associated protein B (SMB1) from Saccharomyces cerevisiae (strain ATCC 204508 / S288c) (Baker's yeast).